Here is a 78-residue protein sequence, read N- to C-terminus: MPKRILQGVVVSDKGAKTIVVRVERTFLHPLLRKTVRRTKRYHAHDEANAYKVGDQVQIQECAPKSKLKRWEVVTVAA.

The protein belongs to the universal ribosomal protein uS17 family. Part of the 30S ribosomal subunit.

One of the primary rRNA binding proteins, it binds specifically to the 5'-end of 16S ribosomal RNA. The polypeptide is Small ribosomal subunit protein uS17 (Maricaulis maris (strain MCS10) (Caulobacter maris)).